A 763-amino-acid chain; its full sequence is Actin filament-associated protein 1-like 1 (763 aa).

The tract at residues 83 to 137 is disordered; the sequence is LQDMPEDEAESCKAASPEPAKSPSLRHTADLPPPLPNRPPPEDYYEEALPLGPGK. A phosphoserine mark is found at S98, S104, and S153. Residues 169 to 210 form a disordered region; sequence TRMNGELKNSYNDSDAMSSSYESYDEEEEEGKGPQPTHQWPS. Over residues 175–185 the composition is skewed to polar residues; that stretch reads LKNSYNDSDAM. The 97-residue stretch at 220 to 316 folds into the PH 1 domain; the sequence is DCRICAFLLR…WLKVIREVSK (97 aa). A phosphoserine mark is found at S329 and S343. Residues 343–380 form a disordered region; sequence SQEKQTSDSDSLGMGDSCSTLGREHGKGKKSSLSELKG. The region spanning 413-507 is the PH 2 domain; the sequence is EVPCCGYLNV…WLGLLLVEMG (95 aa). Y552 is modified (phosphotyrosine). Positions 561 to 604 are disordered; it reads QDEEPERPPGAQVKRHASTCSEKSHRVDPQVKVKRHASSAHQYK. The segment covering 582–591 has biased composition (basic and acidic residues); that stretch reads EKSHRVDPQV. Residues 606-694 are a coiled coil; the sequence is GKNRAEEDAR…LVTVKERLQQ (89 aa). A compositionally biased stretch (polar residues) spans 712 to 724; that stretch reads SGETANKPQNNVP. Residues 712-763 are disordered; that stretch reads SGETANKPQNNVPEQPLPVNCVSELRKRSPSIINSNQGRVLQKAKEWEMKKT. At S742 the chain carries Phosphoserine. Basic and acidic residues predominate over residues 754–763; the sequence is KAKEWEMKKT.

In terms of assembly, interacts with CTTN.

It localises to the cytoplasm. The protein resides in the cell projection. It is found in the podosome. The protein localises to the invadopodium. Its subcellular location is the cytoskeleton. It localises to the stress fiber. In terms of biological role, may be involved in podosome and invadosome formation. This is Actin filament-associated protein 1-like 1 (AFAP1L1) from Bos taurus (Bovine).